The primary structure comprises 381 residues: Arrestin homolog (381 aa).

Belongs to the arrestin family.

The protein is Arrestin homolog of Heliothis virescens (Tobacco budworm moth).